The chain runs to 97 residues: Co-chaperonin GroES (97 aa).

This sequence belongs to the GroES chaperonin family. Heptamer of 7 subunits arranged in a ring. Interacts with the chaperonin GroEL.

Its subcellular location is the cytoplasm. Together with the chaperonin GroEL, plays an essential role in assisting protein folding. The GroEL-GroES system forms a nano-cage that allows encapsulation of the non-native substrate proteins and provides a physical environment optimized to promote and accelerate protein folding. GroES binds to the apical surface of the GroEL ring, thereby capping the opening of the GroEL channel. This Buchnera aphidicola subsp. Thelaxes suberi protein is Co-chaperonin GroES.